We begin with the raw amino-acid sequence, 147 residues long: UPF0306 protein YhbP (147 aa).

The protein belongs to the UPF0306 family.

The chain is UPF0306 protein YhbP from Escherichia fergusonii (strain ATCC 35469 / DSM 13698 / CCUG 18766 / IAM 14443 / JCM 21226 / LMG 7866 / NBRC 102419 / NCTC 12128 / CDC 0568-73).